A 625-amino-acid polypeptide reads, in one-letter code: Vitamin B12 transporter BtuB (625 aa).

Positions 1–21 are cleaved as a signal peptide; that stretch reads MTIKKYTLLTALSVTAFSGWA. Positions 31 to 38 match the TonB box motif; the sequence is DEMVVTAN. The 115-residue stretch at 43–157 folds into the TBDR plug domain; that stretch reads PKSSVLAPVD…IGGVINILTG (115 aa). Residues Ser-90, Asn-97, and 115–116 contribute to the cyanocob(III)alamin site; that span reads IT. The TBDR beta-barrel domain occupies 160–625; that stretch reads KPGTTLSAGL…EYYFTGSYNF (466 aa). A run of 3 beta stranded transmembrane segments spans residues 163–170, 174–183, and 189–200; these read TTLSAGLG, YQTYDGSTQQ, and TTVTLAGNYTYS. Ca(2+)-binding residues include Asp-204, Gln-217, Asp-219, and Asp-221. 2 beta stranded membrane passes run 223-233 and 238-254; these read FMGKMLWAGLE and EQFN…NRSD. The Ca(2+) site is built by Tyr-255, Asp-256, and Asp-269. A run of 14 beta stranded transmembrane segments spans residues 271–285, 287–304, 317–333, 336–345, 363–379, 381–391, 395–410, 413–427, 445–454, 460–469, 484–501, 505–520, 528–540, and 546–561; these read RKLS…LRYK, GIYA…KDYN, SLDE…NTFQ, NGMISAGADW, FTQH…QQIS, VTLEGAVRSDD, FGWH…WEFI, YRLI…KAPN, ESKQWEGGVE, LTWRLSAYRN, YFNI…TGSF, PLSH…PRNA, RRAK…QLDW, and DWSV…YDKD. Ser-317 lines the cyanocob(III)alamin pocket. Arg-528 provides a ligand contact to cyanocob(III)alamin. Tyr-562 contacts cyanocob(III)alamin. A run of 3 beta stranded transmembrane segments spans residues 569–583, 596–607, and 613–625; these read TVEL…LAVS, IANLFDKDYEMV, and PGRE…SYNF. Positions 608 to 625 match the TonB C-terminal box motif; that stretch reads YGYQTPGREYYFTGSYNF.

This sequence belongs to the TonB-dependent receptor family. BtuB (TC 1.B.14.3.1) subfamily.

Its subcellular location is the cell outer membrane. In terms of biological role, involved in the active translocation of vitamin B12 (cyanocobalamin) across the outer membrane to the periplasmic space. It derives its energy for transport by interacting with the trans-periplasmic membrane protein TonB. The protein is Vitamin B12 transporter BtuB of Yersinia pestis bv. Antiqua (strain Antiqua).